A 143-amino-acid chain; its full sequence is UPF0651 protein P31B10.02, mitochondrial (143 aa).

Positions 48-93 constitute an Oxidoreductase-like domain; sequence IYDGIRVPPKPEEPLNCCQSGCAICVWDVYADDLEEYNRARRKAKR.

The protein belongs to the UPF0651 family.

It localises to the mitochondrion. The chain is UPF0651 protein P31B10.02, mitochondrial from Schizosaccharomyces pombe (strain 972 / ATCC 24843) (Fission yeast).